The sequence spans 259 residues: Protein TILLER ANGLE CONTROL 1 (259 aa).

Positions 56 to 62 (GILAIGT) match the IGT motif motif. Disordered stretches follow at residues 96–123 (EEKA…AKMH), 206–226 (SCME…PLKA), and 239–259 (GKKI…PVTA). The span at 109–119 (APSEPASALEP) shows a compositional bias: low complexity.

It belongs to the TAC family. As to expression, expressed in the basal part of seedlings.

Its function is as follows. Involved in the regulation of tiller growth angle. Promotes horizontal shoot growth. TAC1 and LAZY1 play opposite functions in the regulation of tiller growth angle. The polypeptide is Protein TILLER ANGLE CONTROL 1 (Oryza sativa subsp. indica (Rice)).